We begin with the raw amino-acid sequence, 343 residues long: Cytoplasmic tRNA 2-thiolation protein 1 (343 aa).

Belongs to the TtcA family. CTU1/NCS6/ATPBD3 subfamily.

It localises to the cytoplasm. Its pathway is tRNA modification; 5-methoxycarbonylmethyl-2-thiouridine-tRNA biosynthesis. Functionally, plays a central role in 2-thiolation of mcm(5)S(2)U at tRNA wobble positions of tRNA(Lys), tRNA(Glu) and tRNA(Gln). Directly binds tRNAs and probably acts by catalyzing adenylation of tRNAs, an intermediate required for 2-thiolation. It is unclear whether it acts as a sulfurtransferase that transfers sulfur from thiocarboxylated URM1 onto the uridine of tRNAs at wobble position. In Drosophila yakuba (Fruit fly), this protein is Cytoplasmic tRNA 2-thiolation protein 1.